The chain runs to 255 residues: 5-oxoprolinase subunit A 1 (255 aa).

This sequence belongs to the LamB/PxpA family. As to quaternary structure, forms a complex composed of PxpA, PxpB and PxpC.

It catalyses the reaction 5-oxo-L-proline + ATP + 2 H2O = L-glutamate + ADP + phosphate + H(+). Its function is as follows. Catalyzes the cleavage of 5-oxoproline to form L-glutamate coupled to the hydrolysis of ATP to ADP and inorganic phosphate. This Agrobacterium fabrum (strain C58 / ATCC 33970) (Agrobacterium tumefaciens (strain C58)) protein is 5-oxoprolinase subunit A 1.